Consider the following 128-residue polypeptide: Glycine cleavage system H protein (128 aa).

Positions 24-106 (VYSVGITEHA…YTDGWLFSIK (83 aa)) constitute a Lipoyl-binding domain. The residue at position 65 (K65) is an N6-lipoyllysine.

This sequence belongs to the GcvH family. As to quaternary structure, the glycine cleavage system is composed of four proteins: P, T, L and H. It depends on (R)-lipoate as a cofactor.

In terms of biological role, the glycine cleavage system catalyzes the degradation of glycine. The H protein shuttles the methylamine group of glycine from the P protein to the T protein. This Yersinia enterocolitica serotype O:8 / biotype 1B (strain NCTC 13174 / 8081) protein is Glycine cleavage system H protein.